The chain runs to 647 residues: Chaperone protein DnaK (647 aa).

Thr-198 is subject to Phosphothreonine; by autocatalysis. The tract at residues 603-647 is disordered; the sequence is EQAQGAGGAQGFDPNAFQGGDAGQQQKADDGVVDAEFTEVKDDKK. Over residues 618 to 628 the composition is skewed to low complexity; that stretch reads AFQGGDAGQQQ.

Belongs to the heat shock protein 70 family.

Acts as a chaperone. The sequence is that of Chaperone protein DnaK from Acinetobacter baylyi (strain ATCC 33305 / BD413 / ADP1).